The following is a 213-amino-acid chain: Ras-related protein Rab-39B (213 aa).

GTP-binding residues include S17, G20, K21, S22, C23, S37, and T40. A Mg(2+)-binding site is contributed by S22. A switch-I region spans residues 35–43 (QVSDPTVGV). Residues T40 and D64 each contribute to the Mg(2+) site. GTP-binding residues include G67, H123, K124, D126, A154, and R155. Residues 67–83 (GQERFRSITRAYYRNSV) are switch-II. Residue S201 is modified to Phosphoserine. 2 S-geranylgeranyl cysteine lipidation sites follow: C211 and C213. Residue C213 is modified to Cysteine methyl ester.

This sequence belongs to the small GTPase superfamily. Rab family. In terms of assembly, interacts (GDP-bound) with C9orf72; C9orf72 in complex with SMCR8 acts as a GEF for RAB39B. Interacts (in GTP-bound form) with PICK1 (via PDZ domain); a PICK1 homodimer may allow simultaneous association of RAB39B and GRIA2 to PICK1 which is involved in GRIA2 trafficking. Interacts with isoform c of RASSF1; the interaction is strong. Interacts with isoform a of RASSF1; the interaction is weak. Interacts with the DLG4/PSD-95. Interacts (GTP-bound) with HOPS complex components VPS39 and VPS41. Mg(2+) is required as a cofactor. In terms of tissue distribution, highly expressed in the brain.

Its subcellular location is the cell membrane. The protein localises to the cytoplasmic vesicle membrane. The protein resides in the golgi apparatus. It is found in the cytoplasmic vesicle. It localises to the autophagosome membrane. Its subcellular location is the autolysosome membrane. The enzyme catalyses GTP + H2O = GDP + phosphate + H(+). With respect to regulation, regulated by guanine nucleotide exchange factors (GEFs) including C9orf72-SMCR8 complex, which promote the exchange of bound GDP for free GTP. Regulated by GTPase activating proteins (GAPs) which increase the GTP hydrolysis activity. Inhibited by GDP dissociation inhibitors (GDIs). Its function is as follows. The small GTPases Rab are key regulators of intracellular membrane trafficking, from the formation of transport vesicles to their fusion with membranes. Rabs cycle between an inactive GDP-bound form and an active GTP-bound form that is able to recruit to membranes different sets of downstream effectors directly responsible for vesicle formation, movement, tethering and fusion. RAB39B is involved in autophagy and may function in autophagosome formation. Binds downstream effector PICK1 to ensure selectively GRIA2 exit from the endoplasmic reticulum to the Golgi and to regulate AMPAR composition at the post-synapses and thus synaptic transmission. May regulate the homeostasis of SNCA/alpha-synuclein. The protein is Ras-related protein Rab-39B of Homo sapiens (Human).